The following is a 576-amino-acid chain: Putative ankyrin repeat protein L86 (576 aa).

ANK repeat units lie at residues 68–101, 118–147, 159–188, 192–223, 227–260, 264–300, 304–337, 341–373, 377–408, 412–446, and 448–480; these read HGWT…DPNI, TRIN…NVNF, SGGF…NPNI, KGNT…DLNS, KRKT…NPNI, KGNT…NPNI, SGIS…DPNI, QGLT…DPNI, KGKN…NPNA, KGRT…SLTD, and NGKK…TFDV.

The protein is Putative ankyrin repeat protein L86 of Acanthamoeba polyphaga mimivirus (APMV).